Here is a 318-residue protein sequence, read N- to C-terminus: Protein W (318 aa).

2 disordered regions span residues 1–23 and 38–318; these read MDQD…GGRE and SEPT…KKGA. Positions 7 to 20 are enriched in basic and acidic residues; sequence ILKEDSEVEREAPG. Polar residues predominate over residues 50 to 59; sequence LHNTINTPQG. Serine 68 is subject to Phosphoserine; by host. Residues 83-101 show a composition bias toward basic and acidic residues; sequence RSGEESRVSGRTSKPEAEA. Serine 125 is subject to Phosphoserine; by host. Over residues 150 to 168 the composition is skewed to basic and acidic residues; that stretch reads GIEDENREMAAHPDKRGED. Positions 191-206 are enriched in polar residues; that stretch reads ASNNGRSMEPGSSHSA. Serine 192, serine 249, serine 257, and serine 260 each carry phosphoserine; by host.

The chain is Protein W (P/V/C) from Sendai virus (strain Z) (SeV).